The chain runs to 374 residues: Probable tRNA pseudouridine synthase D (374 aa).

The active-site Nucleophile is the aspartate 81. The TRUD domain occupies 141–340 (VFPNYFDVQR…RKGFQKMYDL (200 aa)).

The protein belongs to the pseudouridine synthase TruD family.

It carries out the reaction uridine(13) in tRNA = pseudouridine(13) in tRNA. In terms of biological role, could be responsible for synthesis of pseudouridine from uracil-13 in transfer RNAs. The sequence is that of Probable tRNA pseudouridine synthase D from Nanoarchaeum equitans (strain Kin4-M).